A 224-amino-acid polypeptide reads, in one-letter code: ATP-dependent dethiobiotin synthetase BioD (224 aa).

ATP is bound at residue 14-19; it reads GIGKTV. Position 18 (Thr18) interacts with Mg(2+). The active site involves Lys39. Ser43 serves as a coordination point for substrate. Residues Asp56, 117 to 120, and 177 to 178 each bind ATP; these read EGVG and NE. Asp56 and Glu117 together coordinate Mg(2+).

The protein belongs to the dethiobiotin synthetase family. As to quaternary structure, homodimer. Requires Mg(2+) as cofactor.

It localises to the cytoplasm. It catalyses the reaction (7R,8S)-7,8-diammoniononanoate + CO2 + ATP = (4R,5S)-dethiobiotin + ADP + phosphate + 3 H(+). The protein operates within cofactor biosynthesis; biotin biosynthesis; biotin from 7,8-diaminononanoate: step 1/2. Its function is as follows. Catalyzes a mechanistically unusual reaction, the ATP-dependent insertion of CO2 between the N7 and N8 nitrogen atoms of 7,8-diaminopelargonic acid (DAPA, also called 7,8-diammoniononanoate) to form a ureido ring. The chain is ATP-dependent dethiobiotin synthetase BioD from Xanthomonas campestris pv. campestris (strain B100).